A 323-amino-acid chain; its full sequence is Transcription initiation factor IIB 7 (323 aa).

Positions 1–16 (MTRSTRQRERETAAKQ) are enriched in basic and acidic residues. Residues 1 to 35 (MTRSTRQRERETAAKQEEEEDSEEGVRECPECGSD) form a disordered region. Residues 24-56 (EGVRECPECGSDNLVKSSDRAELVCNDCGLVVE) form a TFIIB-type zinc finger. Zn(2+) contacts are provided by Cys-29, Cys-32, Cys-48, and Cys-51. 2 repeat units span residues 142–225 (SEID…SQEL) and 236–317 (KYVP…EQIE).

The protein belongs to the TFIIB family.

Stabilizes TBP binding to an archaeal box-A promoter. Also responsible for recruiting RNA polymerase II to the pre-initiation complex (DNA-TBP-TFIIB). In Halobacterium salinarum (strain ATCC 700922 / JCM 11081 / NRC-1) (Halobacterium halobium), this protein is Transcription initiation factor IIB 7.